The following is a 209-amino-acid chain: Ribonuclease HII (209 aa).

Residues 18–209 (GLIAGVDEVG…FKPVKALLEG (192 aa)) form the RNase H type-2 domain. Asp24, Glu25, and Asp116 together coordinate a divalent metal cation.

Belongs to the RNase HII family. Requires Mn(2+) as cofactor. Mg(2+) is required as a cofactor.

The protein localises to the cytoplasm. It carries out the reaction Endonucleolytic cleavage to 5'-phosphomonoester.. Functionally, endonuclease that specifically degrades the RNA of RNA-DNA hybrids. This Shewanella putrefaciens (strain CN-32 / ATCC BAA-453) protein is Ribonuclease HII.